The following is a 434-amino-acid chain: KH domain-containing protein 3 (434 aa).

The involved in RNA binding stretch occupies residues 1–39 (MATLKTFRTLVQLKHKLGKAYEIVGEPRLPKWFHVEYLE). The 79-residue stretch at 40–118 (DPKKMYVEPT…CRMKLMEKEA (79 aa)) folds into the KH; atypical domain. A phosphothreonine mark is found at Thr267 and Thr279. The segment at 334–434 (VREAATQQTP…RAVWEPFVML (101 aa)) is required for interaction with NUMA1 and regulation of apoptosis in response to DNA damage.

The protein belongs to the KHDC1 family. In terms of assembly, component of the subcortical maternal complex (SCMC), at least composed of NLRP5, KHDC3, OOEP, and TLE6. Within the complex, interacts with NLRP5, KHDC3 and TLE6. The SCMC may facilitate translocation of its components between the nuclear and cytoplasmic compartments. Forms a scaffold complex with OOEP/FLOPED, and interacts with BLM and TRIM25 at DNA replication forks. Interacts with PARP1; the interaction is increased following the formation of DNA double-strand breaks. Interacts (via C-terminus) with NUMA1.

The protein resides in the cytoplasm. The protein localises to the cell cortex. It is found in the nucleus. Its subcellular location is the mitochondrion. It localises to the cytoskeleton. The protein resides in the microtubule organizing center. The protein localises to the centrosome. It is found in the chromosome. In terms of biological role, component of the subcortical maternal complex (SCMC), a multiprotein complex that plays a key role in early embryonic development. The SCMC complex is a structural constituent of cytoplasmic lattices, which consist in fibrous structures found in the cytoplasm of oocytes and preimplantation embryos. They are required to store maternal proteins critical for embryonic development, such as proteins that control epigenetic reprogramming of the preimplantation embryo, and prevent their degradation or activation. KHDC3 ensures proper spindle assembly by regulating the localization of AURKA via RHOA signaling and of PLK1 via a RHOA-independent process. Required for the localization of MAD2L1 to kinetochores to enable spindle assembly checkpoint function. As part of the OOEP-KHDC3 scaffold, recruits BLM and TRIM25 to DNA replication forks, thereby promoting the ubiquitination of BLM by TRIM25, enhancing BLM retainment at replication forks and therefore promoting stalled replication fork restart. Regulates homologous recombination-mediated DNA repair via recruitment of RAD51 to sites of DNA double-strand breaks, and sustainment of PARP1 activity, which in turn modulates downstream ATM or ATR activation. Activation of ATM or ATR in response to DNA double-strand breaks may be cell-type specific. Its role in DNA double-strand break repair is independent of its role in restarting stalled replication forks. Promotes neural stem cell neurogenesis and neuronal differentiation in the hippocampus. May regulate normal development of learning, memory and anxiety. Capable of binding RNA. This is KH domain-containing protein 3 from Rattus norvegicus (Rat).